A 353-amino-acid chain; its full sequence is Protein MGF 360-13L (353 aa).

It belongs to the asfivirus MGF 360 family.

Its function is as follows. Plays a role in virus cell tropism, and may be required for efficient virus replication in macrophages. The sequence is that of Protein MGF 360-13L from African swine fever virus (isolate Tick/Malawi/Lil 20-1/1983) (ASFV).